Here is a 392-residue protein sequence, read N- to C-terminus: Protein trapped in endoderm-1 (392 aa).

The Extracellular segment spans residues 1-39; the sequence is MDQDMGMATGYFQDADMQMDEPAAATQSIYPHSATLFAA. A helical transmembrane segment spans residues 40–60; that stretch reads ISACVFVTIGVLGNLITLLAL. Residues 61 to 73 are Cytoplasmic-facing; sequence LKSPTIREHATTA. A helical transmembrane segment spans residues 74–94; sequence FVISLSISDLLFCSFSLPLTA. Topologically, residues 95–110 are extracellular; the sequence is VRFFQESWTFGTTLCK. The helical transmembrane segment at 111–131 threads the bilayer; sequence IFPVIFYGNVAVSLLSMVGIT. Residues 132 to 156 lie on the Cytoplasmic side of the membrane; sequence LNRYILIACHSRYSQIYKPKFITLQ. The helical transmembrane segment at 157–177 threads the bilayer; sequence LLFVWAVSFLLLLPPILGIWG. Residues 178 to 202 are Extracellular-facing; that stretch reads EMGLDEATFSCTILKKEGRSIKKTL. Residues 203–223 traverse the membrane as a helical segment; that stretch reads FVIGFLLPCLVIIVSYSCIYI. The Cytoplasmic segment spans residues 224 to 268; the sequence is TVLHQKKKIRNHDNFQIAAAKGSSSSGGGSYMTTTCTRKAREDNR. The chain crosses the membrane as a helical span at residues 269–289; sequence LTVMMVTIFLCFLVCFLPLML. Topologically, residues 290–302 are extracellular; that stretch reads ANVVDDERNTSYP. The N-linked (GlcNAc...) asparagine glycan is linked to Asn-298. The helical transmembrane segment at 303 to 323 threads the bilayer; the sequence is WLHIIASVMAWASSVINPIIY. The Cytoplasmic segment spans residues 324–392; the sequence is AASNRNYRVA…INQMCQTYSV (69 aa). Residues Ser-359, Ser-362, and Ser-366 each carry the phosphoserine modification. Thr-372 is subject to Phosphothreonine.

The protein belongs to the G-protein coupled receptor 1 family. In embryos, expression is seen at highest levels in the cuprophilic cells and at lower levels in the amnioserosa, developing CNS, cardiac mesoderm primordium and midline glia.

The protein resides in the cell membrane. In terms of biological role, essential for the first active step of germ cell migration: transepithelial migration of germ cells through the posterior midgut (PMG) epithelium. This is Protein trapped in endoderm-1 (Tre1) from Drosophila melanogaster (Fruit fly).